Consider the following 94-residue polypeptide: DNA-binding protein HU (94 aa).

The disordered stretch occupies residues 56–94 (QKGKEGKVPGSDKTYKTEDKRVPKFKPGKTLKQKVEEGK). A compositionally biased stretch (basic and acidic residues) spans 68-77 (KTYKTEDKRV). A compositionally biased stretch (basic residues) spans 78 to 87 (PKFKPGKTLK).

Belongs to the bacterial histone-like protein family. Homodimer.

In terms of biological role, histone-like DNA-binding protein which is capable of wrapping DNA to stabilize it, and thus to prevent its denaturation under extreme environmental conditions. This chain is DNA-binding protein HU (hup), found in Helicobacter pylori (strain ATCC 700392 / 26695) (Campylobacter pylori).